Consider the following 92-residue polypeptide: PqqA binding protein (92 aa).

This sequence belongs to the PqqD family. In terms of assembly, monomer. Interacts with PqqE.

The protein operates within cofactor biosynthesis; pyrroloquinoline quinone biosynthesis. Functions as a PqqA binding protein and presents PqqA to PqqE, in the pyrroloquinoline quinone (PQQ) biosynthetic pathway. The sequence is that of PqqA binding protein from Stutzerimonas stutzeri (strain A1501) (Pseudomonas stutzeri).